The following is a 341-amino-acid chain: GTPase Obg (341 aa).

The 159-residue stretch at 1 to 159 (MKFLDQAKVY…RAIWLRLKLI (159 aa)) folds into the Obg domain. One can recognise an OBG-type G domain in the interval 160–327 (ADAGLVGLPN…VLRAGAHIIE (168 aa)). Residues 166-173 (GLPNAGKS), 191-195 (FTTLH), 212-215 (DIPG), 279-282 (SQID), and 308-310 (SAV) each bind GTP. Mg(2+) is bound by residues Ser-173 and Thr-193.

The protein belongs to the TRAFAC class OBG-HflX-like GTPase superfamily. OBG GTPase family. As to quaternary structure, monomer. Mg(2+) serves as cofactor.

It is found in the cytoplasm. In terms of biological role, an essential GTPase which binds GTP, GDP and possibly (p)ppGpp with moderate affinity, with high nucleotide exchange rates and a fairly low GTP hydrolysis rate. Plays a role in control of the cell cycle, stress response, ribosome biogenesis and in those bacteria that undergo differentiation, in morphogenesis control. The chain is GTPase Obg from Bartonella tribocorum (strain CIP 105476 / IBS 506).